A 465-amino-acid polypeptide reads, in one-letter code: Triplex capsid protein 1 (465 aa).

The protein belongs to the herpesviridae TRX1 protein family. Interacts with TRX2, MCP and capsid vertex component 2/CVC2.

Its subcellular location is the virion. The protein localises to the host nucleus. Functionally, structural component of the T=16 icosahedral capsid. The capsid is composed of pentamers and hexamers of major capsid protein/MCP, which are linked together by heterotrimers called triplexes. These triplexes are formed by a single molecule of triplex protein 1/TRX1 and two copies of triplex protein 2/TRX2. Additionally, TRX1 is required for efficient transport of TRX2 to the nucleus, which is the site of capsid assembly. The protein is Triplex capsid protein 1 of Equus caballus (Horse).